The sequence spans 185 residues: Segregation and condensation protein B (185 aa).

The protein belongs to the ScpB family. As to quaternary structure, homodimer. Homodimerization may be required to stabilize the binding of ScpA to the Smc head domains. Component of a cohesin-like complex composed of ScpA, ScpB and the Smc homodimer, in which ScpA and ScpB bind to the head domain of Smc. The presence of the three proteins is required for the association of the complex with DNA.

The protein localises to the cytoplasm. Participates in chromosomal partition during cell division. May act via the formation of a condensin-like complex containing Smc and ScpA that pull DNA away from mid-cell into both cell halves. The polypeptide is Segregation and condensation protein B (Alkaliphilus oremlandii (strain OhILAs) (Clostridium oremlandii (strain OhILAs))).